We begin with the raw amino-acid sequence, 140 residues long: ATP synthase epsilon chain (140 aa).

It belongs to the ATPase epsilon chain family. As to quaternary structure, F-type ATPases have 2 components, CF(1) - the catalytic core - and CF(0) - the membrane proton channel. CF(1) has five subunits: alpha(3), beta(3), gamma(1), delta(1), epsilon(1). CF(0) has three main subunits: a, b and c.

The protein localises to the cell inner membrane. In terms of biological role, produces ATP from ADP in the presence of a proton gradient across the membrane. In Nitrosococcus oceani (strain ATCC 19707 / BCRC 17464 / JCM 30415 / NCIMB 11848 / C-107), this protein is ATP synthase epsilon chain.